We begin with the raw amino-acid sequence, 579 residues long: 2-isopropylmalate synthase (579 aa).

Residues 40-314 (PRWCAVDLRD…DPMIDFSDID (275 aa)) form the Pyruvate carboxyltransferase domain. Residues aspartate 49, histidine 253, histidine 255, and asparagine 289 each contribute to the Mg(2+) site. Residues 456 to 579 (SDEEQAQWGR…VNRAVRDAQA (124 aa)) form a regulatory domain region.

Belongs to the alpha-IPM synthase/homocitrate synthase family. LeuA type 2 subfamily. Homodimer. Requires Mg(2+) as cofactor.

It is found in the cytoplasm. The enzyme catalyses 3-methyl-2-oxobutanoate + acetyl-CoA + H2O = (2S)-2-isopropylmalate + CoA + H(+). Its pathway is amino-acid biosynthesis; L-leucine biosynthesis; L-leucine from 3-methyl-2-oxobutanoate: step 1/4. Functionally, catalyzes the condensation of the acetyl group of acetyl-CoA with 3-methyl-2-oxobutanoate (2-ketoisovalerate) to form 3-carboxy-3-hydroxy-4-methylpentanoate (2-isopropylmalate). This chain is 2-isopropylmalate synthase, found in Paenarthrobacter aurescens (strain TC1).